The chain runs to 203 residues: Snake venom metalloproteinase fibrolase (203 aa).

Glutamine 1 is subject to Pyrrolidone carboxylic acid. The Peptidase M12B domain maps to 7-203 (RYVQLVIVAD…NNPQCILNKP (197 aa)). 3 disulfide bridges follow: cysteine 118–cysteine 198, cysteine 158–cysteine 182, and cysteine 160–cysteine 165. Histidine 143 contributes to the Zn(2+) binding site. Residue glutamate 144 is part of the active site. Positions 147 and 153 each coordinate Zn(2+).

It belongs to the venom metalloproteinase (M12B) family. P-I subfamily. Monomer. Zn(2+) serves as cofactor. In terms of tissue distribution, expressed by the venom gland.

Its subcellular location is the secreted. The enzyme catalyses Hydrolysis of 14-Ala-|-Leu-15 in insulin B chain and 413-Lys-|-Leu-414 in alpha-chain of fibrinogen.. Its activity is regulated as follows. Is inhibited by EDTA, o-phenanthroline and tetraethylenepentamine. Its function is as follows. Snake venom zinc metalloprotease that exhibits direct fibrinolytic activity. The protein is Snake venom metalloproteinase fibrolase of Agkistrodon contortrix contortrix (Southern copperhead).